Reading from the N-terminus, the 229-residue chain is Large ribosomal subunit protein uL1 (229 aa).

This sequence belongs to the universal ribosomal protein uL1 family. In terms of assembly, part of the 50S ribosomal subunit.

Functionally, binds directly to 23S rRNA. The L1 stalk is quite mobile in the ribosome, and is involved in E site tRNA release. Its function is as follows. Protein L1 is also a translational repressor protein, it controls the translation of the L11 operon by binding to its mRNA. This chain is Large ribosomal subunit protein uL1, found in Clostridium botulinum (strain Loch Maree / Type A3).